A 346-amino-acid polypeptide reads, in one-letter code: N-acetyl-gamma-glutamyl-phosphate reductase (346 aa).

Cys-150 is an active-site residue.

It belongs to the NAGSA dehydrogenase family. Type 1 subfamily.

Its subcellular location is the cytoplasm. It carries out the reaction N-acetyl-L-glutamate 5-semialdehyde + phosphate + NADP(+) = N-acetyl-L-glutamyl 5-phosphate + NADPH + H(+). It participates in amino-acid biosynthesis; L-arginine biosynthesis; N(2)-acetyl-L-ornithine from L-glutamate: step 3/4. Its function is as follows. Catalyzes the NADPH-dependent reduction of N-acetyl-5-glutamyl phosphate to yield N-acetyl-L-glutamate 5-semialdehyde. The protein is N-acetyl-gamma-glutamyl-phosphate reductase of Desulforamulus reducens (strain ATCC BAA-1160 / DSM 100696 / MI-1) (Desulfotomaculum reducens).